Reading from the N-terminus, the 822-residue chain is ATP-dependent zinc metalloprotease FtsH (822 aa).

Residues 1 to 76 are Cytoplasmic-facing; sequence MEFNKLELLI…NQKEPGKARK (76 aa). Residues 44-54 are compositionally biased toward polar residues; it reads SLDQPSDAPSN. Residues 44-71 form a disordered region; the sequence is SLDQPSDAPSNNKKRNLDQPDNPNQKEP. Residues 77–97 traverse the membrane as a helical segment; sequence IIWSFIIIILVLGVLALIILS. The Extracellular portion of the chain corresponds to 98–251; sequence GFSFSATSLN…QSMSLPTSYS (154 aa). Residues 252–272 form a helical membrane-spanning segment; sequence FYTAASLVLSILPFILLIGII. Topologically, residues 273–822 are cytoplasmic; it reads YYSMRKMGQA…SKESSSDKKK (550 aa). 347 to 354 is a binding site for ATP; that stretch reads GPPGTGKT. H569 is a Zn(2+) binding site. The active site involves E570. Residues H573 and D648 each contribute to the Zn(2+) site. A compositionally biased stretch (basic and acidic residues) spans 758–794; that stretch reads KKELEEKKKAEDLIRKAKKESEASSKEEKEMDVEKKV. The disordered stretch occupies residues 758-822; that stretch reads KKELEEKKKA…SKESSSDKKK (65 aa). Positions 796–805 are enriched in low complexity; it reads KPSASSTEPT. The segment covering 812-822 has biased composition (basic and acidic residues); sequence PSKESSSDKKK.

This sequence in the central section; belongs to the AAA ATPase family. In the C-terminal section; belongs to the peptidase M41 family. Homohexamer. Requires Zn(2+) as cofactor.

Its subcellular location is the cell membrane. Acts as a processive, ATP-dependent zinc metallopeptidase for both cytoplasmic and membrane proteins. Plays a role in the quality control of integral membrane proteins. In Malacoplasma penetrans (strain HF-2) (Mycoplasma penetrans), this protein is ATP-dependent zinc metalloprotease FtsH.